The sequence spans 277 residues: Protein HEAT-INDUCED TAS1 TARGET 1 (277 aa).

The protein belongs to the heat induced plant HTT protein family. Interacts with the heat shock proteins HSP70-14 and At2g33735/HSP40, and with NFYC2 in both cytoplasm and nucleus. As to expression, expressed ubiquitously, including in seedlings, leaves, stems, inflorescences and siliques.

It localises to the cytoplasm. It is found in the nucleus. Mediates both basal and acquired thermotolerance via HSFA1s-directed pathways (e.g. HSFA1A, HSFA1B, and HSFA1D). Triggers the expression of HSFA1A and HSFA1B. This is Protein HEAT-INDUCED TAS1 TARGET 1 from Arabidopsis thaliana (Mouse-ear cress).